The sequence spans 149 residues: uncharacterized protein (149 aa).

Residues 130–144 (ESNVTKENIEIKEEK) are compositionally biased toward basic and acidic residues. Residues 130-149 (ESNVTKENIEIKEEKEENSE) are disordered.

This is an uncharacterized protein from Methanocaldococcus jannaschii (strain ATCC 43067 / DSM 2661 / JAL-1 / JCM 10045 / NBRC 100440) (Methanococcus jannaschii).